A 158-amino-acid chain; its full sequence is PRA1 family protein 2 (158 aa).

A run of 4 helical transmembrane segments spans residues 36 to 58 (NLNF…TLFT), 62 to 79 (LLVA…LFFV), 88 to 108 (FAVL…VIVI), and 113 to 133 (GLTL…HSAL).

The protein belongs to the PRA1 family.

Its subcellular location is the membrane. In terms of biological role, may act as a general Rab protein regulator. The polypeptide is PRA1 family protein 2 (prafB) (Dictyostelium discoideum (Social amoeba)).